A 67-amino-acid chain; its full sequence is Phycobilisome 7.8 kDa linker polypeptide, allophycocyanin-associated, core (67 aa).

Residues methionine 1–phenylalanine 56 enclose the CpcD-like domain.

The protein belongs to the phycobilisome linker protein family.

The protein localises to the cellular thylakoid membrane. Rod linker protein, associated with allophycocyanin. Linker polypeptides determine the state of aggregation and the location of the disk-shaped phycobiliprotein units within the phycobilisome and modulate their spectroscopic properties in order to mediate a directed and optimal energy transfer. The sequence is that of Phycobilisome 7.8 kDa linker polypeptide, allophycocyanin-associated, core (apcC) from Thermosynechococcus vestitus (strain NIES-2133 / IAM M-273 / BP-1).